We begin with the raw amino-acid sequence, 380 residues long: Peroxisomal membrane protein PEX13 (380 aa).

The interval 1-30 (MSDSSAPDLPSKPSSLNAGQSSSLQTTNTG) is disordered. Residues 1–230 (MSDSSAPDLP…NKNTNKLSLK (230 aa)) lie on the Lumenal side of the membrane. The segment covering 12–30 (KPSSLNAGQSSSLQTTNTG) has biased composition (polar residues). Residues 231 to 251 (PLLLFLAAVVGFPYLLKKLIA) traverse the membrane as a helical segment. Topologically, residues 252 to 380 (HLAETSQMNG…DSTEFQKMKT (129 aa)) are cytoplasmic. The region spanning 277–344 (TKLEFARALY…PYNYVEIIER (68 aa)) is the SH3 domain.

This sequence belongs to the peroxin-13 family. Interacts (via SH3 domain) with PEX14 (via SH3-binding motif); forming the PEX13-PEX14 docking complex.

It localises to the peroxisome membrane. Component of the PEX13-PEX14 docking complex, a translocon channel that specifically mediates the import of peroxisomal cargo proteins bound to PEX5 receptor. The PEX13-PEX14 docking complex forms a large import pore which can be opened to a diameter of about 9 nm. Mechanistically, PEX5 receptor along with cargo proteins associates with the PEX14 subunit of the PEX13-PEX14 docking complex in the cytosol, leading to the insertion of the receptor into the organelle membrane with the concomitant translocation of the cargo into the peroxisome matrix. The chain is Peroxisomal membrane protein PEX13 (PEX13) from Komagataella pastoris (Yeast).